The chain runs to 531 residues: 2-isopropylmalate synthase (531 aa).

The region spanning 8–284 is the Pyruvate carboxyltransferase domain; that stretch reads IIIFDTTLRD…LTNIDTKQIY (277 aa). D17, H208, H210, and N244 together coordinate Mn(2+). The regulatory domain stretch occupies residues 408 to 531; sequence RVELVQVSCG…TQDKQTEVTA (124 aa).

Belongs to the alpha-IPM synthase/homocitrate synthase family. LeuA type 1 subfamily. As to quaternary structure, homodimer. The cofactor is Mn(2+).

It localises to the cytoplasm. It carries out the reaction 3-methyl-2-oxobutanoate + acetyl-CoA + H2O = (2S)-2-isopropylmalate + CoA + H(+). The protein operates within amino-acid biosynthesis; L-leucine biosynthesis; L-leucine from 3-methyl-2-oxobutanoate: step 1/4. Catalyzes the condensation of the acetyl group of acetyl-CoA with 3-methyl-2-oxobutanoate (2-ketoisovalerate) to form 3-carboxy-3-hydroxy-4-methylpentanoate (2-isopropylmalate). The sequence is that of 2-isopropylmalate synthase from Nostoc sp. (strain PCC 7120 / SAG 25.82 / UTEX 2576).